The chain runs to 144 residues: Large ribosomal subunit protein uL13 (144 aa).

The protein belongs to the universal ribosomal protein uL13 family. In terms of assembly, part of the 50S ribosomal subunit.

This protein is one of the early assembly proteins of the 50S ribosomal subunit, although it is not seen to bind rRNA by itself. It is important during the early stages of 50S assembly. This is Large ribosomal subunit protein uL13 from Mesomycoplasma hyopneumoniae (strain 232) (Mycoplasma hyopneumoniae).